Here is a 182-residue protein sequence, read N- to C-terminus: Putative manganese efflux pump MntP 1 (182 aa).

6 consecutive transmembrane segments (helical) span residues Leu4–Ala24, Ile42–Ile62, Ser63–Tyr83, Leu103–Ile123, Val127–Leu147, and Ile162–Phe182.

Belongs to the MntP (TC 9.B.29) family.

Its subcellular location is the cell inner membrane. Probably functions as a manganese efflux pump. This chain is Putative manganese efflux pump MntP 1, found in Wolinella succinogenes (strain ATCC 29543 / DSM 1740 / CCUG 13145 / JCM 31913 / LMG 7466 / NCTC 11488 / FDC 602W) (Vibrio succinogenes).